We begin with the raw amino-acid sequence, 643 residues long: Thioredoxin reductase 3 (643 aa).

The segment at 1 to 53 (MERSPPQSPGPGKAGDAPNRRSGHVRGARVLSPPGRRARLSSPGPSRSSEARE) is disordered. Arg26 carries the post-translational modification Asymmetric dimethylarginine; alternate. Arg26 carries the omega-N-methylarginine; alternate modification. Ser41 and Ser42 each carry phosphoserine. The 101-residue stretch at 56–156 (RRHLVGLIER…KLLQEDLAYD (101 aa)) folds into the Glutaredoxin domain. 158-187 (DLIIIGGGSGGLSCAKEAAILGKKVMVLDF) contributes to the FAD binding site. Cys203 and Cys208 are joined by a disulfide. Lys379 carries the N6-succinyllysine modification. His616 acts as the Proton acceptor in catalysis. Positions 641–642 (CU) form a cross-link, cysteinyl-selenocysteine (Cys-Sec). Position 642 (Sec642) is a non-standard amino acid, selenocysteine.

The protein belongs to the class-I pyridine nucleotide-disulfide oxidoreductase family. Homodimer. FAD is required as a cofactor.

The protein resides in the cytoplasm. It localises to the nucleus. The protein localises to the microsome. Its subcellular location is the endoplasmic reticulum. The catalysed reaction is [thioredoxin]-dithiol + NADP(+) = [thioredoxin]-disulfide + NADPH + H(+). In terms of biological role, displays thioredoxin reductase, glutaredoxin and glutathione reductase activities. Catalyzes disulfide bond isomerization. Promotes disulfide bond formation between GPX4 and various sperm proteins and may play a role in sperm maturation by promoting formation of sperm structural components. This Homo sapiens (Human) protein is Thioredoxin reductase 3.